We begin with the raw amino-acid sequence, 484 residues long: UDP-glucose:undecaprenyl-phosphate glucose-1-phosphate transferase (484 aa).

5 helical membrane passes run 37–57 (MVVA…VPAA), 59–79 (YRVA…LFPL), 93–113 (VVLG…ALIV), 122–142 (GWVG…RTLL), and 299–319 (ILAV…AVGV).

Belongs to the bacterial sugar transferase family.

Its subcellular location is the cell inner membrane. The catalysed reaction is di-trans,octa-cis-undecaprenyl phosphate + UDP-alpha-D-glucose = alpha-D-glucosyl di-trans,octa-cis-undecaprenyl diphosphate + UMP. It functions in the pathway glycan biosynthesis; xanthan biosynthesis. Its function is as follows. Is the initiating enzyme for the synthesis of the exopolysaccharide xanthan. Catalyzes the transfer of the glucose-1-phosphate moiety from UDP-Glc onto the carrier lipid undecaprenyl phosphate (C55-P), forming a phosphoanhydride bond yielding to glucosyl-pyrophosphoryl-undecaprenol (Glc-PP-C55). The protein is UDP-glucose:undecaprenyl-phosphate glucose-1-phosphate transferase (gumD) of Xanthomonas campestris pv. campestris.